We begin with the raw amino-acid sequence, 169 residues long: Monothiol glutaredoxin-S15, mitochondrial (169 aa).

The N-terminal 37 residues, 1-37 (MAASLSSRLIKGIANLKAVRSSRLTSASVYQNGMMRF), are a transit peptide targeting the mitochondrion. Residues 38–61 (SSTVPSDSDTHDDFKPTQKVPPDS) form a disordered region. One can recognise a Glutaredoxin domain in the interval 66 to 168 (KDIVENDVKD…QKLKDVSGNQ (103 aa)). Lys-83 contacts glutathione. Cys-91 serves as a coordination point for [2Fe-2S] cluster. Glutathione is bound by residues Lys-120, Phe-132, and 145 to 146 (SD).

It belongs to the glutaredoxin family. CGFS subfamily. In terms of assembly, [2Fe-2S]-bridged holo-homodimer. Interacts in vitro with SUFE1, BOLA1, BOLA2 and BOLA4. Interacts in vivo only with BOLA4.

It localises to the mitochondrion. May only reduce GSH-thiol disulfides, but not protein disulfides. Participates probably to the maturation of iron-sulfur proteins and to the regulation of the redox state of the BOLA proteins. The polypeptide is Monothiol glutaredoxin-S15, mitochondrial (Arabidopsis thaliana (Mouse-ear cress)).